Reading from the N-terminus, the 927-residue chain is Non-lysosomal glucosylceramidase (927 aa).

A disordered region spans residues 32-62 (EETGGTKDVQVTDCKSPEDSRPPKETDCCNP). Basic and acidic residues predominate over residues 46–58 (KSPEDSRPPKETD).

It belongs to the non-lysosomal glucosylceramidase family. In terms of tissue distribution, widely expressed. Mainly expressed in brain, heart, skeletal muscle, kidney and placenta and expressed at lower levels in liver, spleen, small intestine and lung. Detectable in colon, thymus and peripheral blood leukocytes.

The protein resides in the endoplasmic reticulum membrane. It localises to the golgi apparatus membrane. The catalysed reaction is a beta-D-glucosyl-(1&lt;-&gt;1')-N-acylsphing-4-enine + H2O = an N-acylsphing-4-enine + D-glucose. It catalyses the reaction a beta-D-galactosyl-(1&lt;-&gt;1')-N-acylsphing-4-enine + H2O = an N-acylsphing-4-enine + D-galactose. It carries out the reaction beta-D-glucosyl-(1-&gt;3)-O-lithocholate + H2O = lithocholate + D-glucose. The enzyme catalyses beta-D-glucosyl-(1-&gt;3)-O-chenodeoxycholate + H2O = chenodeoxycholate + D-glucose. The catalysed reaction is a di-trans,poly-cis-dolichyl beta-D-glucosyl phosphate + chenodeoxycholate = beta-D-glucosyl-(1-&gt;3)-O-chenodeoxycholate + a di-trans,poly-cis-dolichyl phosphate + H(+). It catalyses the reaction octyl beta-D-glucose + chenodeoxycholate = beta-D-glucosyl-(1-&gt;3)-O-chenodeoxycholate + octan-1-ol. It carries out the reaction cholesteryl 3-beta-D-glucoside + H2O = cholesterol + D-glucose. The enzyme catalyses a beta-D-glucosyl-(1&lt;-&gt;1')-N-acylsphing-4-enine + cholesterol = cholesteryl 3-beta-D-glucoside + an N-acylsphing-4-enine. The catalysed reaction is beta-D-glucosyl-N-(9Z-octadecenoyl)-sphing-4E-enine + cholesterol = N-(9Z-octadecenoyl)-sphing-4-enine + cholesteryl 3-beta-D-glucoside. It catalyses the reaction a beta-D-galactosyl-(1&lt;-&gt;1')-N-acylsphing-4-enine + cholesterol = cholesteryl 3-beta-D-galactoside + an N-acylsphing-4-enine. It carries out the reaction 1-(beta-D-galactosyl)-N-dodecanoylsphing-4-enine + cholesterol = cholesteryl 3-beta-D-galactoside + N-dodecanoylsphing-4-enine. It participates in lipid metabolism; sphingolipid metabolism. It functions in the pathway steroid metabolism; cholesterol metabolism. With respect to regulation, inhibited by AMP-DMN/N -((5-adamantane-1-yl-methoxy)pentyl)-deoxynojirimycin. Activated by Mn(2+), Co(2+) and Mg(2+) and inhibited by Zn(2+). Enzymatic activity is dependent on membrane association and requires the presence of lipids. The membrane-associated enzyme is not inhibited by condutiriol B epoxide and bromocondutiriol B epoxide. Its function is as follows. Non-lysosomal glucosylceramidase that catalyzes the hydrolysis of glucosylceramides/GlcCers (such as beta-D-glucosyl-(1&lt;-&gt;1')-N-acylsphing-4-enine) to free glucose and ceramides (such as N-acylsphing-4-enine). GlcCers are membrane glycosphingolipids that have a wide intracellular distribution. They are the main precursors of more complex glycosphingolipids that play a role in cellular growth, differentiation, adhesion, signaling, cytoskeletal dynamics and membrane properties. Involved in the transglucosylation of cholesterol, transfers glucose from GlcCer to cholesterol, thereby modifying its water solubility and biological properties. Under specific conditions, may catalyze the reverse reaction, transferring glucose from cholesteryl-3-beta-D-glucoside to ceramide (such as N-acylsphing-4-enine). May play a role in the metabolism of bile acids. Able to hydrolyze bile acid 3-O-glucosides as well as to produce bile acid-glucose conjugates thanks to a bile acid glucosyl transferase activity. Catalyzes the hydrolysis of galactosylceramides/GalCers (such as beta-D-galactosyl-(1&lt;-&gt;1')-N-acylsphing-4-enine), as well as the galactosyl transfer between GalCers and cholesterol in vitro with lower activity compared with their activity against GlcCers. In Homo sapiens (Human), this protein is Non-lysosomal glucosylceramidase.